A 460-amino-acid chain; its full sequence is Light-independent protochlorophyllide reductase subunit N (460 aa).

[4Fe-4S] cluster contacts are provided by cysteine 20, cysteine 45, and cysteine 105.

This sequence belongs to the BchN/ChlN family. In terms of assembly, protochlorophyllide reductase is composed of three subunits; ChlL, ChlN and ChlB. Forms a heterotetramer of two ChlB and two ChlN subunits. [4Fe-4S] cluster is required as a cofactor.

The protein localises to the plastid. Its subcellular location is the chloroplast. The catalysed reaction is chlorophyllide a + oxidized 2[4Fe-4S]-[ferredoxin] + 2 ADP + 2 phosphate = protochlorophyllide a + reduced 2[4Fe-4S]-[ferredoxin] + 2 ATP + 2 H2O. Its pathway is porphyrin-containing compound metabolism; chlorophyll biosynthesis (light-independent). Functionally, component of the dark-operative protochlorophyllide reductase (DPOR) that uses Mg-ATP and reduced ferredoxin to reduce ring D of protochlorophyllide (Pchlide) to form chlorophyllide a (Chlide). This reaction is light-independent. The NB-protein (ChlN-ChlB) is the catalytic component of the complex. The protein is Light-independent protochlorophyllide reductase subunit N of Adiantum capillus-veneris (Maidenhair fern).